The chain runs to 287 residues: MRLSLIAAARAEGVAAKGLLRAHKWWSLRRLTQIMALGVFMAGPLAGVWLVRGNFASSEILGVLPLSDPFIALQSLMTGAVPAGVALLGAALIVLFYLVVGGRAYCGWICPVNIVTDTAYWLREKLGITRDRKLDRRTRLWVLAGALLASFLSGAIAWEFVNPVSLLQRGLIFGLGVGWTVIAAVFLLDLLVTRRGWCGHLCPVGAFYGIVGKTSLVRVAAARREGCTNCGACFQICTEPHVITPALKGTGSTLILSGDCVNCGSCIDACPVNVFEMTMRGRSISPH.

4Fe-4S ferredoxin-type domains follow at residues 218–248 (RVAA…PALK) and 251–280 (GSTL…MTMR). Positions 227, 230, 233, 237, 260, 263, 266, and 270 each coordinate [4Fe-4S] cluster.

It participates in one-carbon metabolism; methylamine degradation. Functionally, involved in electron transfer. This chain is Methylamine utilization ferredoxin-type protein MauN (mauN), found in Methylorubrum extorquens (strain ATCC 14718 / DSM 1338 / JCM 2805 / NCIMB 9133 / AM1) (Methylobacterium extorquens).